We begin with the raw amino-acid sequence, 8797 residues long: Nesprin-1 (8797 aa).

Residues 1–289 form an actin-binding region; sequence MATSRGASRC…KHYPDIHNAS (289 aa). Topologically, residues 1–8746 are cytoplasmic; that stretch reads MATSRGASRC…GRGFLFRVLR (8746 aa). Calponin-homology (CH) domains lie at 27-134 and 178-283; these read IVQK…LYFQ and GNAK…KHYP. Spectrin repeat units follow at residues 314 to 397, 398 to 502, 503 to 609, 610 to 703, 704 to 815, 816 to 923, 924 to 1024, 1025 to 1122, 1123 to 1246, 1247 to 1335, 1336 to 1444, 1445 to 1550, 1551 to 1653, 1654 to 1763, 1764 to 1879, 1880 to 1976, 1977 to 2081, 2082 to 2195, 2196 to 2303, 2304 to 2401, 2402 to 2513, 2514 to 2619, 2620 to 2731, 2732 to 2838, 2839 to 2962, 2963 to 3062, 3063 to 3171, 3172 to 3275, 3276 to 3387, 3388 to 3490, 3491 to 3593, 3594 to 3720, 3721 to 3814, 3815 to 3920, 3921 to 4028, 4029 to 4139, 4140 to 4235, 4236 to 4339, 4340 to 4451, 4452 to 4560, 4561 to 4669, 4670 to 4776, 4777 to 4882, 4883 to 4991, 4992 to 5099, 5100 to 5209, 5210 to 5318, 5319 to 5424, 5425 to 5522, 5523 to 5630, 5631 to 5736, and 5737 to 5842; these read REDR…SRLF, DWHI…HLMK, MEFL…SMLE, EVIS…YAQA, DEMD…QLLI, PLEE…KHVE, TNSR…HLKI, DVEK…LMED, PDKW…NSLE, ELIS…ERRI, QVTL…MEMV, KTKW…ILGH, LSQQ…LENL, LAHW…LQSV, VAEH…SHAS, LSGI…ADAL, AVLK…QGQC, CGLI…LRVS, LSIW…KDFT, AQST…KTQA, SLQE…LQDC, ASEL…LRSC, QVAL…LESV, ISQW…VEEI, VKDH…SGQV, AQLE…QNKE, QILQ…LENL, KIQM…VSRL, DRIV…LEGA, LSKW…SEKL, VRLH…RTQF, NNVV…YSDW, YGST…LEKG, LHLA…LEAK, VKDH…QRMY, QSLE…KHLK, SELW…REED, LQRT…IQVS, VTNL…LNKA, LSEK…LEKN, LVSR…VQEA, ILAR…LEDT, TSAY…CESR, MVQS…LTEI, YSQC…LQRC, TAQW…LEDA, VDEW…GKLV, KQEL…EQSK, ATSQ…LSKL, NQAA…LQDA, AKDM…MQEA, and VVQY…PSAH. Residues 314–8666 are a coiled coil; that stretch reads REDRVIFKEM…EKLLDVSSSQ (8353 aa). Residue Ser732 is modified to Phosphoserine. Thr2270 is subject to Phosphothreonine. Phosphoserine is present on Ser5657. Residues 5859–5886 are disordered; it reads PVTEESGEEGTNSEISSPPACRSPSPVA. Spectrin repeat units follow at residues 5962-6071, 6072-6178, 6374-6485, 6486-6581, 6582-6691, 6692-6795, 6796-6902, 6903-7020, 7021-7128, 7129-7237, 7238-7350, 7351-7454, 7455-7558, 7559-7671, 7672-7783, 7784-7883, 7884-7997, 7998-8106, and 8107-8216; these read LERQ…LEEK, LNDQ…SLLE, RQSI…RLQQ, ILNF…RSGL, NQNL…LETW, SHLD…TILK, HWTR…QEKL, HQLQ…LEGL, LESW…LKSV, LDQW…SKAL, LQLW…LQAG, VLDY…LQSF, LLQH…RGII, DSQI…LAFL, LKDW…NEWA, VFSE…LKET, LVAV…IEET, WRLW…LKHF, and IGQR…LPLP. Ser8223 is subject to Phosphoserine. The segment at 8246 to 8279 is disordered; it reads DSLLSPQPSSNLSLSLAQPLRSERSGRDTPASVD. The segment covering 8247-8265 has biased composition (low complexity); the sequence is SLLSPQPSSNLSLSLAQPL. The residue at position 8274 (Thr8274) is a Phosphothreonine. 3 positions are modified to phosphoserine: Ser8277, Ser8280, and Ser8305. Spectrin repeat units lie at residues 8329 to 8438, 8439 to 8548, and 8549 to 8666; these read SALE…MKQN, LQKW…LQDA, and LMQC…SSSQ. The residue at position 8360 (Thr8360) is a Phosphothreonine. The tract at residues 8671-8734 is disordered; the sequence is SWSSADELDT…DSSLSEPGPG (64 aa). Composition is skewed to polar residues over residues 8680 to 8696 and 8704 to 8729; these read TSGS…PNRQ and SLSQ…SSLS. The KASH domain maps to 8738 to 8797; that stretch reads RGFLFRVLRAALPLQLLLLLLIGLACLVPMSEEDYSCALSNNFARSFHPMLRYTNGPPPL. The helical; Anchor for type IV membrane protein transmembrane segment at 8747 to 8767 threads the bilayer; sequence AALPLQLLLLLLIGLACLVPM. The Perinuclear space segment spans residues 8768 to 8797; the sequence is SEEDYSCALSNNFARSFHPMLRYTNGPPPL.

This sequence belongs to the nesprin family. Core component of LINC complexes which are composed of inner nuclear membrane SUN domain-containing proteins coupled to outer nuclear membrane KASH domain-containing nesprins. SUN and KASH domain-containing proteins seem to bind each other promiscuously; however, differentially expression of LINC complex constituents can give rise to specific assemblies. At least SUN1/2-containing core LINC complexes are proposed to be hexameric composed of three protomers of each KASH and SUN domain-containing protein. The SUN2:SYNE1/KASH1 LINC complex is a heterohexamer; the homotrimeric cloverleave-like conformation of the SUN domain is a prerequisite for LINC complex formation in which three separate SYNE1/KASH1 peptides bind at the interface of adjacent SUN domains. Self-associates. Interacts with SYNE3. Interacts with SPAG4/SUN4. May interact with MUSK. Interacts with F-actin via its N-terminal domain. Interacts with EMD and LMNA in vitro. Interacts (via KASH domain) with TMEM258. Post-translationally, the disulfid bond with SUN1 or SUN2 is required for stability of the respective LINC complex under tensile forces. In terms of tissue distribution, expressed in HeLa, A431, A172 and HaCaT cells (at protein level). Widely expressed. Highly expressed in skeletal and smooth muscles, heart, spleen, peripheral blood leukocytes, pancreas, cerebellum, stomach, kidney and placenta. Isoform GSRP-56 is predominantly expressed in heart and skeletal muscle (at protein level).

It localises to the nucleus outer membrane. Its subcellular location is the nucleus. The protein localises to the nucleus envelope. The protein resides in the cytoplasm. It is found in the cytoskeleton. It localises to the myofibril. Its subcellular location is the sarcomere. The protein localises to the golgi apparatus. Functionally, multi-isomeric modular protein which forms a linking network between organelles and the actin cytoskeleton to maintain the subcellular spatial organization. As a component of the LINC (LInker of Nucleoskeleton and Cytoskeleton) complex involved in the connection between the nuclear lamina and the cytoskeleton. The nucleocytoplasmic interactions established by the LINC complex play an important role in the transmission of mechanical forces across the nuclear envelope and in nuclear movement and positioning. May be involved in nucleus-centrosome attachment and nuclear migration in neural progenitors implicating LINC complex association with SUN1/2 and probably association with cytoplasmic dynein-dynactin motor complexes; SYNE1 and SYNE2 may act redundantly. Required for centrosome migration to the apical cell surface during early ciliogenesis. May be involved in nuclear remodeling during sperm head formation in spermatogenesis; a probable SUN3:SYNE1/KASH1 LINC complex may tether spermatid nuclei to posterior cytoskeletal structures such as the manchette. The sequence is that of Nesprin-1 from Homo sapiens (Human).